A 293-amino-acid chain; its full sequence is Protease HtpX (293 aa).

The next 2 helical transmembrane spans lie at 4 to 24 (IALFLITNLAVMLVFGLVLSL) and 34 to 54 (GLMIMAGLFGFGGAFVSLLMS). A Zn(2+)-binding site is contributed by His-139. Glu-140 is a catalytic residue. Position 143 (His-143) interacts with Zn(2+). A run of 2 helical transmembrane segments spans residues 158–178 (IVNTFVIFISRLIAQVVSGFL) and 193–213 (MVYFAVATVLELVFGILASII). Position 222 (Glu-222) interacts with Zn(2+).

The protein belongs to the peptidase M48B family. It depends on Zn(2+) as a cofactor.

It is found in the cell inner membrane. The sequence is that of Protease HtpX from Pectobacterium atrosepticum (strain SCRI 1043 / ATCC BAA-672) (Erwinia carotovora subsp. atroseptica).